The sequence spans 602 residues: Aspartate--tRNA(Asp/Asn) ligase (602 aa).

Position 170 (glutamate 170) interacts with L-aspartate. An aspartate region spans residues 194–197 (QLFK). Arginine 216 is an L-aspartate binding site. ATP contacts are provided by residues 216–218 (RDE) and glutamine 225. Histidine 448 serves as a coordination point for L-aspartate. Glutamate 482 provides a ligand contact to ATP. Arginine 489 serves as a coordination point for L-aspartate. ATP is bound at residue 534–537 (GWDR). The tract at residues 559–602 (GGVDPLTSAPAPITAQQRKESGVDAKPEPKGDAAAAKPQVSAEK) is disordered. Positions 575–589 (QRKESGVDAKPEPKG) are enriched in basic and acidic residues.

This sequence belongs to the class-II aminoacyl-tRNA synthetase family. Type 1 subfamily. Homodimer.

The protein resides in the cytoplasm. It catalyses the reaction tRNA(Asx) + L-aspartate + ATP = L-aspartyl-tRNA(Asx) + AMP + diphosphate. Aspartyl-tRNA synthetase with relaxed tRNA specificity since it is able to aspartylate not only its cognate tRNA(Asp) but also tRNA(Asn). Reaction proceeds in two steps: L-aspartate is first activated by ATP to form Asp-AMP and then transferred to the acceptor end of tRNA(Asp/Asn). The polypeptide is Aspartate--tRNA(Asp/Asn) ligase (Rhodococcus opacus (strain B4)).